The sequence spans 511 residues: Bifunctional purine biosynthesis protein PurH (511 aa).

The MGS-like domain occupies 1-145 (MKQRALVSVS…KNHKFVSVIV (145 aa)).

Belongs to the PurH family.

It carries out the reaction (6R)-10-formyltetrahydrofolate + 5-amino-1-(5-phospho-beta-D-ribosyl)imidazole-4-carboxamide = 5-formamido-1-(5-phospho-D-ribosyl)imidazole-4-carboxamide + (6S)-5,6,7,8-tetrahydrofolate. The catalysed reaction is IMP + H2O = 5-formamido-1-(5-phospho-D-ribosyl)imidazole-4-carboxamide. Its pathway is purine metabolism; IMP biosynthesis via de novo pathway; 5-formamido-1-(5-phospho-D-ribosyl)imidazole-4-carboxamide from 5-amino-1-(5-phospho-D-ribosyl)imidazole-4-carboxamide (10-formyl THF route): step 1/1. It participates in purine metabolism; IMP biosynthesis via de novo pathway; IMP from 5-formamido-1-(5-phospho-D-ribosyl)imidazole-4-carboxamide: step 1/1. In Bacillus cereus (strain AH187), this protein is Bifunctional purine biosynthesis protein PurH.